A 516-amino-acid chain; its full sequence is BAR/IMD domain-containing adapter protein 2-like 2 (516 aa).

An IMD domain is found at 1–227; sequence MSGVNSDLLH…PTPLDQEAQL (227 aa). The interval 200-273 is disordered; sequence ADGWKEKVSE…SSSVGESLGL (74 aa). Positions 201–212 are enriched in basic and acidic residues; sequence DGWKEKVSESRS. Over residues 226-236 the composition is skewed to polar residues; sequence QLKSSVGSLLQ. Basic and acidic residues predominate over residues 238–247; that stretch reads GDREMDREPL. A compositionally biased stretch (low complexity) spans 249–270; sequence RVPSRAPSPLPSRSRSSSVGES. The SH3 domain occupies 274–337; sequence GGGRSMRAIV…PAAYVASTED (64 aa). Over residues 355–376 the composition is skewed to polar residues; the sequence is LLEPTSQSESDTQTYSEVSSPV. Residues 355–516 form a disordered region; it reads LLEPTSQSES…TNDRSAPRIQ (162 aa). Basic and acidic residues predominate over residues 434–450; it reads PDRRAESHFESKVELKN. Residues 454-465 are compositionally biased toward pro residues; it reads LPPPAPPLPNSP.

It localises to the cell membrane. Its function is as follows. Phosphoinositides-binding protein that induces the formation of planar or gently curved membrane structures. The polypeptide is BAR/IMD domain-containing adapter protein 2-like 2 (baiap2l2) (Danio rerio (Zebrafish)).